We begin with the raw amino-acid sequence, 416 residues long: Serine hydroxymethyltransferase (416 aa).

(6S)-5,6,7,8-tetrahydrofolate is bound by residues Leu-118 and 122-124 (GHL). The residue at position 226 (Lys-226) is an N6-(pyridoxal phosphate)lysine. Residues Glu-242 and 350-352 (SPF) each bind (6S)-5,6,7,8-tetrahydrofolate.

It belongs to the SHMT family. As to quaternary structure, homodimer. Pyridoxal 5'-phosphate serves as cofactor.

The protein localises to the cytoplasm. It catalyses the reaction (6R)-5,10-methylene-5,6,7,8-tetrahydrofolate + glycine + H2O = (6S)-5,6,7,8-tetrahydrofolate + L-serine. Its pathway is one-carbon metabolism; tetrahydrofolate interconversion. It functions in the pathway amino-acid biosynthesis; glycine biosynthesis; glycine from L-serine: step 1/1. In terms of biological role, catalyzes the reversible interconversion of serine and glycine with tetrahydrofolate (THF) serving as the one-carbon carrier. This reaction serves as the major source of one-carbon groups required for the biosynthesis of purines, thymidylate, methionine, and other important biomolecules. Also exhibits THF-independent aldolase activity toward beta-hydroxyamino acids, producing glycine and aldehydes, via a retro-aldol mechanism. In Helicobacter pylori (strain G27), this protein is Serine hydroxymethyltransferase.